A 351-amino-acid chain; its full sequence is Phenylalanine--tRNA ligase alpha subunit (351 aa).

Glu-276 is a binding site for Mg(2+).

It belongs to the class-II aminoacyl-tRNA synthetase family. Phe-tRNA synthetase alpha subunit type 1 subfamily. In terms of assembly, tetramer of two alpha and two beta subunits. Mg(2+) serves as cofactor.

The protein localises to the cytoplasm. The enzyme catalyses tRNA(Phe) + L-phenylalanine + ATP = L-phenylalanyl-tRNA(Phe) + AMP + diphosphate + H(+). The protein is Phenylalanine--tRNA ligase alpha subunit of Psychrobacter arcticus (strain DSM 17307 / VKM B-2377 / 273-4).